Reading from the N-terminus, the 503-residue chain is uncharacterized protein (503 aa).

2 stretches are compositionally biased toward basic and acidic residues: residues 1–23 and 203–215; these read MAHE…EKVR and PLEK…RSDQ. Disordered stretches follow at residues 1–29 and 149–227; these read MAHE…TVPV and ETFQ…SNSS. 2 positions are modified to phosphoserine: Ser239 and Ser243. Disordered regions lie at residues 346–370 and 450–475; these read LDPA…GAKW and LLSS…GAPK. The span at 347–356 shows a compositional bias: basic and acidic residues; that stretch reads DPARLPRPDM.

This is an uncharacterized protein from Bos taurus (Bovine).